Consider the following 489-residue polypeptide: MKRLHPALPSCLLLVLFGIWRTAPQTHASSAGLPPLSATSFLEDLMDRYGKNDSLTLTQLKSLLDHLHVGVGRDNVSQPKEGPRNLSTCFSSGDLFAAHNLSERSQIGASEFQEFCPTILQQLDSQACTSENQKSEENEQTEEGKPSAIEVWGYGFLCVTVISLCSLMGASVVPFMKKTFYKRLLLYFIALAIGTLYSNALFQLIPEAFGFNPQDNYVSKSAVVFGGFYLFFFTEKILKMLLKQKNEHHHGHNHFTSETLPSKKDQEEGVTEKLQNGDLDHMIPQHCNSELDGKAPGTDEKVIVNSMSVQDLQASQSACYWLKGVRYSDIGTLAWMITLSDGLHNFIDGLAIGASFTVSVFQGISTSVAILCEEFPHELGDFVILLNAGMSIQQALFFNFLSACCCYLGLAFGILAGSHFSANWIFALAGGMFLYIALADMFPEMNEVCQEDEKNDSFLVPFVIQNLGLLTGFSIMLVLTMYSGQIQIG.

The signal sequence occupies residues 1-28 (MKRLHPALPSCLLLVLFGIWRTAPQTHA). Residues 29–155 (SSAGLPPLSA…PSAIEVWGYG (127 aa)) lie on the Extracellular side of the membrane. Residues N52, N75, N85, and N100 are each glycosylated (N-linked (GlcNAc...) asparagine). Residues 156–176 (FLCVTVISLCSLMGASVVPFM) form a helical membrane-spanning segment. Topologically, residues 177-184 (KKTFYKRL) are cytoplasmic. A helical transmembrane segment spans residues 185 to 205 (LLYFIALAIGTLYSNALFQLI). Residues 206–221 (PEAFGFNPQDNYVSKS) are Extracellular-facing. Residues 222–242 (AVVFGGFYLFFFTEKILKMLL) form a helical membrane-spanning segment. The Cytoplasmic segment spans residues 243 to 349 (KQKNEHHHGH…SDGLHNFIDG (107 aa)). The HHHGHXHX-motif signature appears at 248 to 255 (HHHGHNHF). Residues 350 to 370 (LAIGASFTVSVFQGISTSVAI) traverse the membrane as a helical segment. Topologically, residues 371 to 394 (LCEEFPHELGDFVILLNAGMSIQQ) are extracellular. The XEXPHE-motif motif lies at 373–378 (EEFPHE). A helical transmembrane segment spans residues 395-415 (ALFFNFLSACCCYLGLAFGIL). The Cytoplasmic segment spans residues 416 to 421 (AGSHFS). The chain crosses the membrane as a helical span at residues 422 to 442 (ANWIFALAGGMFLYIALADMF). The Extracellular segment spans residues 443 to 457 (PEMNEVCQEDEKNDS). The helical transmembrane segment at 458 to 478 (FLVPFVIQNLGLLTGFSIMLV) threads the bilayer. The Cytoplasmic segment spans residues 479–489 (LTMYSGQIQIG).

The protein belongs to the ZIP transporter (TC 2.A.5) family. Homotrimer. Ubiquitinated. Ubiquitination occurs upon iron depletion. The ubiquitinated form undergoes proteasomal degradation. In terms of processing, N-glycosylated. N-glycosylation at Asn-100 is required for iron-regulated extraction of the transporter from membranes and subsequent proteasomal degradation. In terms of tissue distribution, widely expressed. Highly and transiently expressed during the early stage of adipocyte differentiation. Strongly expressed in liver, preadipocyte, duodenum and jejunum, moderately in brain, heart, skeletal muscle, spleen, pancreas, kidney and white adipose cells. Expression is almost undetectable in lung, testis and brown adipose cells. Expressed by chondrocytes and pituitary cells. As to expression, more strongly expressed in brain. More strongly expressed in liver, kidney and duodenum.

The protein localises to the cell membrane. Its subcellular location is the apical cell membrane. The protein resides in the basolateral cell membrane. It localises to the early endosome membrane. It is found in the late endosome membrane. The protein localises to the lysosome membrane. The enzyme catalyses Zn(2+)(out) + 2 hydrogencarbonate(out) = Zn(2+)(in) + 2 hydrogencarbonate(in). It catalyses the reaction Mn(2+)(out) + 2 hydrogencarbonate(out) = Mn(2+)(in) + 2 hydrogencarbonate(in). It carries out the reaction Fe(2+)(out) + 2 hydrogencarbonate(out) = Fe(2+)(in) + 2 hydrogencarbonate(in). The catalysed reaction is Cd(2+)(out) + 2 hydrogencarbonate(out) = Cd(2+)(in) + 2 hydrogencarbonate(in). Its activity is regulated as follows. Inhibited by cyanide and therefore dependent of an energy source. Inhibited by DIDS/4,4'-diisothiocyanatostilbene-2,2'-disulfonic acid, an inhibitor hydrogencarbonate-dependent transporters. Functionally, electroneutral transporter of the plasma membrane mediating the cellular uptake of the divalent metal cations zinc, manganese and iron that are important for tissue homeostasis, metabolism, development and immunity. Functions as an energy-dependent symporter, transporting through the membranes an electroneutral complex composed of a divalent metal cation and two bicarbonate anions. Beside these endogenous cellular substrates, can also import cadmium a non-essential metal which is cytotoxic and carcinogenic. Controls the cellular uptake by the intestinal epithelium of systemic zinc, which is in turn required to maintain tight junctions and the intestinal permeability. Modifies the activity of zinc-dependent phosphodiesterases, thereby indirectly regulating G protein-coupled receptor signaling pathways important for gluconeogenesis and chondrocyte differentiation. Regulates insulin receptor signaling, glucose uptake, glycogen synthesis and gluconeogenesis in hepatocytes through the zinc-dependent intracellular catabolism of insulin. Through zinc cellular uptake also plays a role in the adaptation of cells to endoplasmic reticulum stress. Major manganese transporter of the basolateral membrane of intestinal epithelial cells, it plays a central role in manganese systemic homeostasis through intestinal manganese uptake. Also involved in manganese extracellular uptake by cells of the blood-brain barrier. May also play a role in manganese and zinc homeostasis participating in their elimination from the blood through the hepatobiliary excretion. Also functions in the extracellular uptake of free iron. May also function intracellularly and mediate the transport from endosomes to cytosol of iron endocytosed by transferrin. Plays a role in innate immunity by regulating the expression of cytokines by activated macrophages. The protein is Metal cation symporter ZIP14 of Mus musculus (Mouse).